The primary structure comprises 505 residues: Maturase K (505 aa).

Belongs to the intron maturase 2 family. MatK subfamily.

Its subcellular location is the plastid. It is found in the chloroplast. Functionally, usually encoded in the trnK tRNA gene intron. Probably assists in splicing its own and other chloroplast group II introns. The polypeptide is Maturase K (Rosa stellata (Star rose)).